A 311-amino-acid polypeptide reads, in one-letter code: Zeta-sarcoglycan (311 aa).

Topologically, residues M1–Y50 are cytoplasmic. The chain crosses the membrane as a helical; Signal-anchor for type II membrane protein span at residues F51–L71. Over K72–N311 the chain is Extracellular. 2 N-linked (GlcNAc...) asparagine glycosylation sites follow: N75 and N123. Residues C285 and C301 are joined by a disulfide bond.

Belongs to the sarcoglycan beta/delta/gamma/zeta family. In terms of tissue distribution, expressed in the heart, skeletal muscle and arterial vascular smooth muscle.

The protein localises to the cell membrane. It localises to the sarcolemma. The protein resides in the cytoplasm. It is found in the cytoskeleton. Functionally, component of the sarcoglycan complex, a subcomplex of the dystrophin-glycoprotein complex which forms a link between the F-actin cytoskeleton and the extracellular matrix. May play a role in the maintenance of striated muscle membrane stability. The polypeptide is Zeta-sarcoglycan (Sgcz) (Mus musculus (Mouse)).